Consider the following 637-residue polypeptide: Phosphomethylpyrimidine synthase (637 aa).

Substrate is bound by residues Asn242, Met271, Tyr300, His336, 356-358 (SRG), 397-400 (DGLR), and Glu436. His440 contacts Zn(2+). Tyr463 serves as a coordination point for substrate. His504 lines the Zn(2+) pocket. The [4Fe-4S] cluster site is built by Cys584, Cys587, and Cys592.

This sequence belongs to the ThiC family. As to quaternary structure, homodimer. [4Fe-4S] cluster serves as cofactor.

It carries out the reaction 5-amino-1-(5-phospho-beta-D-ribosyl)imidazole + S-adenosyl-L-methionine = 4-amino-2-methyl-5-(phosphooxymethyl)pyrimidine + CO + 5'-deoxyadenosine + formate + L-methionine + 3 H(+). Its pathway is cofactor biosynthesis; thiamine diphosphate biosynthesis. In terms of biological role, catalyzes the synthesis of the hydroxymethylpyrimidine phosphate (HMP-P) moiety of thiamine from aminoimidazole ribotide (AIR) in a radical S-adenosyl-L-methionine (SAM)-dependent reaction. This is Phosphomethylpyrimidine synthase from Herminiimonas arsenicoxydans.